Consider the following 116-residue polypeptide: Large ribosomal subunit protein bL19 (116 aa).

The protein belongs to the bacterial ribosomal protein bL19 family.

Functionally, this protein is located at the 30S-50S ribosomal subunit interface and may play a role in the structure and function of the aminoacyl-tRNA binding site. The chain is Large ribosomal subunit protein bL19 from Geobacillus sp. (strain WCH70).